Consider the following 348-residue polypeptide: Lipoyl synthase, mitochondrial (348 aa).

Cys-105, Cys-110, Cys-116, Cys-136, Cys-140, and Cys-143 together coordinate [4Fe-4S] cluster. Positions 121 to 341 constitute a Radical SAM core domain; the sequence is ETGTATATIM…RTXXLVSYVL (221 aa).

Belongs to the radical SAM superfamily. Lipoyl synthase family. Requires [4Fe-4S] cluster as cofactor.

It is found in the mitochondrion. The enzyme catalyses [[Fe-S] cluster scaffold protein carrying a second [4Fe-4S](2+) cluster] + N(6)-octanoyl-L-lysyl-[protein] + 2 oxidized [2Fe-2S]-[ferredoxin] + 2 S-adenosyl-L-methionine + 4 H(+) = [[Fe-S] cluster scaffold protein] + N(6)-[(R)-dihydrolipoyl]-L-lysyl-[protein] + 4 Fe(3+) + 2 hydrogen sulfide + 2 5'-deoxyadenosine + 2 L-methionine + 2 reduced [2Fe-2S]-[ferredoxin]. The protein operates within protein modification; protein lipoylation via endogenous pathway; protein N(6)-(lipoyl)lysine from octanoyl-[acyl-carrier-protein]: step 2/2. Catalyzes the radical-mediated insertion of two sulfur atoms into the C-6 and C-8 positions of the octanoyl moiety bound to the lipoyl domains of lipoate-dependent enzymes, thereby converting the octanoylated domains into lipoylated derivatives. This Ricinus communis (Castor bean) protein is Lipoyl synthase, mitochondrial (LIP1).